The chain runs to 189 residues: dTTP/UTP pyrophosphatase (189 aa).

The Proton acceptor role is filled by Asp70. The cysteines at positions 74 and 79 are disulfide-linked.

This sequence belongs to the Maf family. YhdE subfamily. As to quaternary structure, homodimer. A divalent metal cation is required as a cofactor.

The protein localises to the cytoplasm. The enzyme catalyses dTTP + H2O = dTMP + diphosphate + H(+). It catalyses the reaction UTP + H2O = UMP + diphosphate + H(+). The catalysed reaction is CTP + H2O = CMP + diphosphate + H(+). It carries out the reaction psi-UTP + H2O = psi-UMP + diphosphate + H(+). The enzyme catalyses 5-methyl-CTP + H2O = 5-methyl-CMP + diphosphate + H(+). It catalyses the reaction 5-methyl-UTP + H2O = 5-methyl-UMP + diphosphate + H(+). Nucleoside triphosphate pyrophosphatase that hydrolyzes dTTP and UTP. Can also hydrolyze CTP and the modified nucleotides pseudo-UTP, 5-methyl-CTP (m(5)CTP) and 5-methyl-UTP (m(5)UTP). May have a dual role in cell division arrest and in preventing the incorporation of modified nucleotides into cellular nucleic acids. In Bacillus subtilis (strain 168), this protein is dTTP/UTP pyrophosphatase.